Consider the following 834-residue polypeptide: Periplasmic nitrate reductase (834 aa).

A signal peptide (tat-type signal) is located at residues 1-32; it reads MTDMKIDRRQMLKLEAAAIAAAAAGMPSTSLA. The 4Fe-4S Mo/W bis-MGD-type domain occupies 44 to 100; it reads LKWDKAACRFCGTGCSVMVATKDNRVVATHGDIKAEVNRGLNCVKGYFLSKIMYGHD. The [4Fe-4S] cluster site is built by C51, C54, C58, and C86. Residues K88, Q155, N180, C184, 217-224, 248-252, 267-269, M378, Q382, N488, 514-515, K537, D564, and 724-733 each bind Mo-bis(molybdopterin guanine dinucleotide); these read WGSNMAEM, STFEH, QTD, SD, and TGRVVEHWHS. Residue W800 participates in substrate binding. 2 residues coordinate Mo-bis(molybdopterin guanine dinucleotide): N808 and K825.

It belongs to the prokaryotic molybdopterin-containing oxidoreductase family. NasA/NapA/NarB subfamily. Component of the periplasmic nitrate reductase NapAB complex composed of NapA and NapB. The cofactor is [4Fe-4S] cluster. Mo-bis(molybdopterin guanine dinucleotide) is required as a cofactor. Predicted to be exported by the Tat system. The position of the signal peptide cleavage has not been experimentally proven.

It is found in the periplasm. It carries out the reaction 2 Fe(II)-[cytochrome] + nitrate + 2 H(+) = 2 Fe(III)-[cytochrome] + nitrite + H2O. Its function is as follows. Catalytic subunit of the periplasmic nitrate reductase complex NapAB. Receives electrons from NapB and catalyzes the reduction of nitrate to nitrite. The protein is Periplasmic nitrate reductase of Bradyrhizobium sp. (strain BTAi1 / ATCC BAA-1182).